We begin with the raw amino-acid sequence, 377 residues long: Chaperone protein DnaJ (377 aa).

One can recognise a J domain in the interval 5–69 (EYYDRLGVSK…QKRAAYDQYG (65 aa)). Residues 133-215 (GTEKEVHYNR…CHGTGHEKQS (83 aa)) form a CR-type zinc finger. The Zn(2+) site is built by Cys146, Cys149, Cys163, Cys166, Cys189, Cys192, Cys203, and Cys206. 4 CXXCXGXG motif repeats span residues 146–153 (CHTCNGSG), 163–170 (CSKCHGSG), 189–196 (CDVCHGTG), and 203–210 (CPTCHGTG).

It belongs to the DnaJ family. In terms of assembly, homodimer. It depends on Zn(2+) as a cofactor.

Its subcellular location is the cytoplasm. Functionally, participates actively in the response to hyperosmotic and heat shock by preventing the aggregation of stress-denatured proteins and by disaggregating proteins, also in an autonomous, DnaK-independent fashion. Unfolded proteins bind initially to DnaJ; upon interaction with the DnaJ-bound protein, DnaK hydrolyzes its bound ATP, resulting in the formation of a stable complex. GrpE releases ADP from DnaK; ATP binding to DnaK triggers the release of the substrate protein, thus completing the reaction cycle. Several rounds of ATP-dependent interactions between DnaJ, DnaK and GrpE are required for fully efficient folding. Also involved, together with DnaK and GrpE, in the DNA replication of plasmids through activation of initiation proteins. The polypeptide is Chaperone protein DnaJ (Streptococcus mutans serotype c (strain ATCC 700610 / UA159)).